Here is a 236-residue protein sequence, read N- to C-terminus: Growth-regulating factor 12 (236 aa).

The disordered stretch occupies residues 1–27 (MLAEGRQVYLPPPPPSKLPRLSGTDPT). Residues 74–109 (ALTFMQRQELEQQVLIYRYFAAGAPVPVHLVLPIWK) enclose the QLQ domain. Positions 140-184 (EPEPGRCRRTDGKKWRCSRDVVPGHKYCERHVHRGRGRSRKPMEA) constitute a WRC domain. 2 consecutive short sequence motifs (bipartite nuclear localization signal) follow at residues 145–155 (RCRRTDGKKWR) and 173–180 (RGRGRSRK).

Belongs to the GRF family.

Its subcellular location is the nucleus. In terms of biological role, transcription activator that plays a regulatory role in gibberellin-induced stem elongation. The chain is Growth-regulating factor 12 (GRF12) from Oryza sativa subsp. japonica (Rice).